Here is a 326-residue protein sequence, read N- to C-terminus: Polyprenal reductase (326 aa).

Helical transmembrane passes span 26–46 (MMFG…TFVE), 84–104 (HFYT…VSTV), 167–187 (INLS…IALL), 212–232 (ILYL…NMIL), and 256–276 (LFNL…FCIA).

The protein belongs to the steroid 5-alpha reductase family. Polyprenal reductase subfamily.

The protein resides in the endoplasmic reticulum membrane. It catalyses the reaction a di-trans,poly-cis-dolichal + NADP(+) = a di-trans,poly-cis-polyprenal + NADPH + H(+). Its pathway is protein modification; protein glycosylation. In terms of biological role, plays a key role in early steps of protein N-linked glycosylation by being involved in the conversion of polyprenol into dolichol. Acts as a polyprenal reductase that mediates the reduction of polyprenal into dolichal in a NADP-dependent mechanism. Dolichols are required for the synthesis of dolichol-linked monosaccharides and the oligosaccharide precursor used for N-glycosylation. This is Polyprenal reductase from Drosophila melanogaster (Fruit fly).